A 504-amino-acid chain; its full sequence is Maturase K (504 aa).

The protein belongs to the intron maturase 2 family. MatK subfamily.

It is found in the plastid. The protein localises to the chloroplast. In terms of biological role, usually encoded in the trnK tRNA gene intron. Probably assists in splicing its own and other chloroplast group II introns. The chain is Maturase K from Mentzelia laevicaulis (Blazing star).